Consider the following 888-residue polypeptide: Patched domain-containing protein 1 (888 aa).

A helical membrane pass occupies residues 20–40; that stretch reads FIASHPVFFASAPVLISILLG. 3 N-linked (GlcNAc...) asparagine glycosylation sites follow: asparagine 77, asparagine 133, and asparagine 167. Residues 268 to 427 form the SSD domain; that stretch reads SERYLVTSLI…LSFYGSSLVF (160 aa). 2 helical membrane passes run 273–293 and 298–318; these read VTSL…QDCV and WLGL…AGII. N-linked (GlcNAc...) asparagine glycans are attached at residues asparagine 319 and asparagine 326. 4 consecutive transmembrane segments (helical) span residues 328–348, 373–393, 407–427, and 502–522; these read TFLG…FEML, LSFS…ASPF, CIAI…SLVF, and PFVV…YLQV. N-linked (GlcNAc...) asparagine glycans are attached at residues asparagine 568, asparagine 599, and asparagine 608. A run of 2 helical transmembrane segments spans residues 707-727 and 738-758; these read ALFL…NVWI and VIGF…LCLI. Asparagine 762 is a glycosylation site (N-linked (GlcNAc...) asparagine). The chain crosses the membrane as a helical span at residues 795-815; sequence GVAILQSYLCYIVGLIPLAAV. Asparagine 818 carries an N-linked (GlcNAc...) asparagine glycan. Residues 826 to 846 traverse the membrane as a helical segment; that stretch reads CLFLIAFVTFFHCFAILPVIL.

The protein belongs to the patched family. Widely expressed, including in various regions of the brain with highest expression in the gray and white cerebellum, followed by the cerebellar vermis and the pituitary gland.

Its subcellular location is the cell membrane. It localises to the cell projection. The protein localises to the dendritic spine. Functionally, required for the development and function of the thalamic reticular nucleus (TRN), a part of the thalamus that is critical for thalamocortical transmission, generation of sleep rhythms, sensorimotor processing and attention. Can bind cholesterol in vitro. The chain is Patched domain-containing protein 1 from Homo sapiens (Human).